The following is a 388-amino-acid chain: Probable proton-coupled zinc antiporter SLC30A3 (388 aa).

The interval 1–42 (MEPSPASGGSETTRLVSPRDRSSAGGGLRLKSLFTEPSEPLP) is disordered. Over 1 to 75 (MEPSPASGGS…SPERAQARRQ (75 aa)) the chain is Cytoplasmic. Phosphoserine is present on residues S63 and S66. The chain crosses the membrane as a helical span at residues 76–96 (LYAACVVCFIFMAGEVVGGYL). Residues 97-105 (AHSLAIMTD) are Lumenal-facing. Residues 106 to 126 (AAHLLADIGSMMASLFSLWLS) traverse the membrane as a helical segment. Zn(2+) contacts are provided by H108 and D112. Residues 127–145 (TRPATRTMTFGWHRSETLG) lie on the Cytoplasmic side of the membrane. The helical transmembrane segment at 146–166 (ALASVVSLWIVTGILLYLAFL) threads the bilayer. The Lumenal portion of the chain corresponds to 167 to 177 (RLLHSDYHIEA). A helical membrane pass occupies residues 178–198 (GAMLLTASIAVCANMIMAFVL). Topologically, residues 199–235 (HQTGAPHSHGPRGAEYAPLEEGHGHPLSLGNTSVRAA) are cytoplasmic. Residues 236–256 (FVHVLGDLLQSLGVLAASILI) form a helical membrane-spanning segment. Residues H238 and D242 each coordinate Zn(2+). Residues 257–263 (YFKPQYK) are Lumenal-facing. A helical transmembrane segment spans residues 264 to 284 (VADPISTFLFSICALGSTAPT). Topologically, residues 285 to 388 (LRDVLLVLME…CLRCREPPKA (104 aa)) are cytoplasmic.

It belongs to the cation diffusion facilitator (CDF) transporter (TC 2.A.4) family. SLC30A subfamily. Homodimer. Homodimerization could regulate efficiency of zinc transport. Interacts with TMEM163.

It localises to the cytoplasmic vesicle. The protein localises to the secretory vesicle. The protein resides in the synaptic vesicle membrane. It is found in the synapse. Its subcellular location is the synaptosome. It localises to the late endosome membrane. The protein localises to the lysosome membrane. It carries out the reaction Zn(2+)(in) + 2 H(+)(out) = Zn(2+)(out) + 2 H(+)(in). Functionally, probable proton-coupled zinc ion antiporter mediating the import of zinc from cytoplasm into synaptic vesicles and participating to cellular zinc ion homeostasis in the brain. The sequence is that of Probable proton-coupled zinc antiporter SLC30A3 from Rattus norvegicus (Rat).